Reading from the N-terminus, the 138-residue chain is Small ribosomal subunit protein uS11c (138 aa).

Positions 1 to 23 (MAKPILRIGSRKNTRSSSRKNVR) are disordered. A compositionally biased stretch (basic residues) spans 9–23 (GSRKNTRSSSRKNVR).

It belongs to the universal ribosomal protein uS11 family. As to quaternary structure, part of the 30S ribosomal subunit.

It is found in the plastid. Its subcellular location is the chloroplast. This chain is Small ribosomal subunit protein uS11c, found in Nasturtium officinale (Watercress).